A 513-amino-acid polypeptide reads, in one-letter code: Putative GMP synthase [glutamine-hydrolyzing] (513 aa).

Positions 8 to 198 (MIVVLDFGGQ…AFAVCGCEGN (191 aa)) constitute a Glutamine amidotransferase type-1 domain. Catalysis depends on C85, which acts as the Nucleophile. The active site involves E174. In terms of domain architecture, GMPS ATP-PPase spans 199 to 388 (WSMENFIELE…LGIPDEVVWR (190 aa)). 226-232 (SGGVDSS) provides a ligand contact to ATP.

As to quaternary structure, homodimer.

It carries out the reaction XMP + L-glutamine + ATP + H2O = GMP + L-glutamate + AMP + diphosphate + 2 H(+). Its pathway is purine metabolism; GMP biosynthesis; GMP from XMP (L-Gln route): step 1/1. Functionally, catalyzes the synthesis of GMP from XMP. The chain is Putative GMP synthase [glutamine-hydrolyzing] (guaA) from Halalkalibacterium halodurans (strain ATCC BAA-125 / DSM 18197 / FERM 7344 / JCM 9153 / C-125) (Bacillus halodurans).